A 463-amino-acid polypeptide reads, in one-letter code: Chromosomal replication initiator protein DnaA (463 aa).

A domain I, interacts with DnaA modulators region spans residues 1 to 83 (MSTNQIILTD…LQLFQHYNNT (83 aa)). The segment at 83-124 (TIKSIEIITKELPGTTQTVTELPTKTFADIGSSELNSENIFS) is domain II. Residues 125-343 (TLDVRFTFDN…GALNKVIAHS (219 aa)) are domain III, AAA+ region. Gly-171, Gly-173, Lys-174, and Thr-175 together coordinate ATP. The tract at residues 344–463 (NFTLKEITLE…INLLMKILQN (120 aa)) is domain IV, binds dsDNA.

This sequence belongs to the DnaA family. In terms of assembly, oligomerizes as a right-handed, spiral filament on DNA at oriC.

Its subcellular location is the cytoplasm. Functionally, plays an essential role in the initiation and regulation of chromosomal replication. ATP-DnaA binds to the origin of replication (oriC) to initiate formation of the DNA replication initiation complex once per cell cycle. Binds the DnaA box (a 9 base pair repeat at the origin) and separates the double-stranded (ds)DNA. Forms a right-handed helical filament on oriC DNA; dsDNA binds to the exterior of the filament while single-stranded (ss)DNA is stabiized in the filament's interior. The ATP-DnaA-oriC complex binds and stabilizes one strand of the AT-rich DNA unwinding element (DUE), permitting loading of DNA polymerase. After initiation quickly degrades to an ADP-DnaA complex that is not apt for DNA replication. Binds acidic phospholipids. This chain is Chromosomal replication initiator protein DnaA, found in Rickettsia conorii (strain ATCC VR-613 / Malish 7).